A 247-amino-acid chain; its full sequence is uncharacterized protein (247 aa).

The N-acetyltransferase domain maps to 102-247; it reads RSIMSRTNDN…ISEHHYRIKR (146 aa).

The protein belongs to the acetyltransferase family.

This is an uncharacterized protein from Bacillus subtilis (strain 168).